The following is a 40-amino-acid chain: MDLRLVLVASPILLAVGWAGFNIGRAAVGQLQLMLKRARG.

A helical membrane pass occupies residues 5–23; the sequence is LVLVASPILLAVGWAGFNI.

It belongs to the PsbY family. PSII is composed of 1 copy each of membrane proteins PsbA, PsbB, PsbC, PsbD, PsbE, PsbF, PsbH, PsbI, PsbJ, PsbK, PsbL, PsbM, PsbT, PsbX, PsbY, PsbZ, Psb30/Ycf12, peripheral proteins PsbO, CyanoQ (PsbQ), PsbU, PsbV and a large number of cofactors. It forms dimeric complexes.

The protein resides in the cellular thylakoid membrane. Functionally, loosely associated component of the core of photosystem II (PSII), it is not always seen in crystals. PSII is a light-driven water plastoquinone oxidoreductase, using light energy to abstract electrons from H(2)O, generating a proton gradient subsequently used for ATP formation. This is Photosystem II reaction center protein Y from Synechococcus sp. (strain RCC307).